The sequence spans 440 residues: ATP-dependent protease ATPase subunit HslU (440 aa).

Residues Ile-18, 60–65 (GVGKTE), Asp-253, Glu-318, and Arg-390 contribute to the ATP site.

Belongs to the ClpX chaperone family. HslU subfamily. A double ring-shaped homohexamer of HslV is capped on each side by a ring-shaped HslU homohexamer. The assembly of the HslU/HslV complex is dependent on binding of ATP.

It localises to the cytoplasm. Functionally, ATPase subunit of a proteasome-like degradation complex; this subunit has chaperone activity. The binding of ATP and its subsequent hydrolysis by HslU are essential for unfolding of protein substrates subsequently hydrolyzed by HslV. HslU recognizes the N-terminal part of its protein substrates and unfolds these before they are guided to HslV for hydrolysis. The sequence is that of ATP-dependent protease ATPase subunit HslU from Shewanella oneidensis (strain ATCC 700550 / JCM 31522 / CIP 106686 / LMG 19005 / NCIMB 14063 / MR-1).